The following is a 133-amino-acid chain: Small ribosomal subunit protein uS8 (133 aa).

It belongs to the universal ribosomal protein uS8 family. In terms of assembly, part of the 30S ribosomal subunit. Contacts proteins S5 and S12.

In terms of biological role, one of the primary rRNA binding proteins, it binds directly to 16S rRNA central domain where it helps coordinate assembly of the platform of the 30S subunit. The sequence is that of Small ribosomal subunit protein uS8 from Nostoc punctiforme (strain ATCC 29133 / PCC 73102).